The following is a 146-amino-acid chain: MORN repeat-containing protein 4 (146 aa).

4 MORN repeats span residues Tyr16–Thr38, Tyr39–Arg61, Tyr62–Thr84, and Phe85–His107.

In terms of assembly, interacts with MYO3A.

It is found in the cytoplasm. It localises to the cell projection. Its subcellular location is the filopodium tip. The protein localises to the stereocilium. In terms of biological role, plays a role in promoting axonal degeneration following neuronal injury by toxic insult or trauma. This chain is MORN repeat-containing protein 4 (MORN4), found in Homo sapiens (Human).